A 328-amino-acid chain; its full sequence is Tetraacyldisaccharide 4'-kinase (328 aa).

An ATP-binding site is contributed by T55–T62.

The protein belongs to the LpxK family.

It carries out the reaction a lipid A disaccharide + ATP = a lipid IVA + ADP + H(+). The protein operates within glycolipid biosynthesis; lipid IV(A) biosynthesis; lipid IV(A) from (3R)-3-hydroxytetradecanoyl-[acyl-carrier-protein] and UDP-N-acetyl-alpha-D-glucosamine: step 6/6. Functionally, transfers the gamma-phosphate of ATP to the 4'-position of a tetraacyldisaccharide 1-phosphate intermediate (termed DS-1-P) to form tetraacyldisaccharide 1,4'-bis-phosphate (lipid IVA). The protein is Tetraacyldisaccharide 4'-kinase of Escherichia coli O157:H7.